Reading from the N-terminus, the 355-residue chain is UDP-N-acetylglucosamine--N-acetylmuramyl-(pentapeptide) pyrophosphoryl-undecaprenol N-acetylglucosamine transferase (355 aa).

The UDP-N-acetyl-alpha-D-glucosamine site is built by Arg-166, Ser-196, and Gln-290.

This sequence belongs to the glycosyltransferase 28 family. MurG subfamily.

It localises to the cell membrane. The catalysed reaction is Mur2Ac(oyl-L-Ala-gamma-D-Glu-L-Lys-D-Ala-D-Ala)-di-trans,octa-cis-undecaprenyl diphosphate + UDP-N-acetyl-alpha-D-glucosamine = beta-D-GlcNAc-(1-&gt;4)-Mur2Ac(oyl-L-Ala-gamma-D-Glu-L-Lys-D-Ala-D-Ala)-di-trans,octa-cis-undecaprenyl diphosphate + UDP + H(+). It participates in cell wall biogenesis; peptidoglycan biosynthesis. Functionally, cell wall formation. Catalyzes the transfer of a GlcNAc subunit on undecaprenyl-pyrophosphoryl-MurNAc-pentapeptide (lipid intermediate I) to form undecaprenyl-pyrophosphoryl-MurNAc-(pentapeptide)GlcNAc (lipid intermediate II). This Staphylococcus haemolyticus (strain JCSC1435) protein is UDP-N-acetylglucosamine--N-acetylmuramyl-(pentapeptide) pyrophosphoryl-undecaprenol N-acetylglucosamine transferase.